Consider the following 668-residue polypeptide: DNA ligase (668 aa).

NAD(+)-binding positions include 37–41, 86–87, and E116; these read DNVYD and SM. K118 acts as the N6-AMP-lysine intermediate in catalysis. 4 residues coordinate NAD(+): R139, E173, K288, and K312. Zn(2+)-binding residues include C406, C409, C424, and C429. The 78-residue stretch at 591–668 folds into the BRCT domain; the sequence is APDNPFKDKT…TEEEAIAQIE (78 aa).

Belongs to the NAD-dependent DNA ligase family. LigA subfamily. The cofactor is Mg(2+). Requires Mn(2+) as cofactor.

It carries out the reaction NAD(+) + (deoxyribonucleotide)n-3'-hydroxyl + 5'-phospho-(deoxyribonucleotide)m = (deoxyribonucleotide)n+m + AMP + beta-nicotinamide D-nucleotide.. Its function is as follows. DNA ligase that catalyzes the formation of phosphodiester linkages between 5'-phosphoryl and 3'-hydroxyl groups in double-stranded DNA using NAD as a coenzyme and as the energy source for the reaction. It is essential for DNA replication and repair of damaged DNA. The sequence is that of DNA ligase from Lactobacillus helveticus (strain DPC 4571).